We begin with the raw amino-acid sequence, 336 residues long: N6-methyladenosine RNA methyltransferase MTA1 (336 aa).

A disordered region spans residues 61-83; the sequence is LISSEPPHLPFKTPEPKAGSGGL.

Belongs to the MT-A70-like family.

The catalysed reaction is an adenosine in mRNA + S-adenosyl-L-methionine = an N(6)-methyladenosine in mRNA + S-adenosyl-L-homocysteine + H(+). In terms of biological role, N6-methyladenosine RNA methyltransferase that plays a crucial role in fungal phenotypic traits, virulence, and stress tolerance. Mediates the methylation of mRNAs to produce N6-methyladenosine (m6A)-containing mRNAs. M6A is a modification present at internal sites of mRNAs and some non-coding RNAs and plays a role in mRNA stability and processing. Mediates specifically acid phosphatase APHA mRNA stability through a YTHDF1-dependent m6A modification of the A1306, A1341, and A1666 key methylation modification sites. Also mediates the stability of the transcription factor ZAP1 mRNA via modification of residue A1935 localized in the 3'UTR. This chain is N6-methyladenosine RNA methyltransferase MTA1, found in Cryphonectria parasitica (strain ATCC 38755 / EP155).